Reading from the N-terminus, the 307-residue chain is Glutaminase 1 (307 aa).

Residues S62, N114, E159, N166, Y190, Y242, and V260 each coordinate substrate.

Belongs to the glutaminase family. As to quaternary structure, homotetramer.

The catalysed reaction is L-glutamine + H2O = L-glutamate + NH4(+). The polypeptide is Glutaminase 1 (Clostridium perfringens (strain 13 / Type A)).